The chain runs to 131 residues: Small ribosomal subunit protein uS8 (131 aa).

This sequence belongs to the universal ribosomal protein uS8 family. As to quaternary structure, part of the 30S ribosomal subunit. Contacts proteins S5 and S12.

In terms of biological role, one of the primary rRNA binding proteins, it binds directly to 16S rRNA central domain where it helps coordinate assembly of the platform of the 30S subunit. The sequence is that of Small ribosomal subunit protein uS8 from Ruminiclostridium cellulolyticum (strain ATCC 35319 / DSM 5812 / JCM 6584 / H10) (Clostridium cellulolyticum).